A 335-amino-acid chain; its full sequence is MGPLSAPPCTEHIKWKGLLVTASLLNFWNLPTTAQVTIEAQPPKVSEGKDVLLLVHNLPQNLTGYIWYKGQIRDLYHYITSYVVDGQIIIYGPAYSGRETAYSNASLLIQNVTREDAGSYTLHIIKRGDGTRGVTGYFTFTLYLETPKPSISSSNLNPREAMETVILTCDPETPDTSYQWWMNGQSLPMTHRFQLSETNRTLFLFGVTKYTAGPYECEIRNSGSASRSDPVTLNLLHGPDLPRIHPSYTNYRSGDNLYLSCFANSNPPAQYSWTINGKFQQSGQNLFIPQITTKHSGLYVCSVRNSATGEESSTSLTVKVSASTRIGLLPLLNPT.

The N-terminal stretch at methionine 1–alanine 34 is a signal peptide. Residues glutamine 35–leucine 144 form the Ig-like V-type domain. N-linked (GlcNAc...) asparagine glycosylation is found at asparagine 61, asparagine 104, asparagine 111, and asparagine 199. 2 Ig-like C2-type domains span residues proline 147 to asparagine 234 and proline 239 to threonine 317. Disulfide bonds link cysteine 169–cysteine 217 and cysteine 261–cysteine 301.

Belongs to the immunoglobulin superfamily. CEA family.

The protein resides in the secreted. In Homo sapiens (Human), this protein is Pregnancy-specific beta-1-glycoprotein 2 (PSG2).